A 208-amino-acid polypeptide reads, in one-letter code: Cytidylate kinase (208 aa).

Position 7–15 (Gly7–Thr15) interacts with ATP.

The protein belongs to the cytidylate kinase family. Type 1 subfamily.

The protein localises to the cytoplasm. It catalyses the reaction CMP + ATP = CDP + ADP. It carries out the reaction dCMP + ATP = dCDP + ADP. The sequence is that of Cytidylate kinase from Xanthobacter autotrophicus (strain ATCC BAA-1158 / Py2).